Reading from the N-terminus, the 651-residue chain is ATP-dependent zinc metalloprotease FtsH (651 aa).

The Extracellular portion of the chain corresponds to 1 to 134 (MIVFATILFG…FTTDPQTAGP (134 aa)). The helical transmembrane segment at 135 to 155 (WARAIAVMAPFVLILLLFFLM) threads the bilayer. The Cytoplasmic segment spans residues 156-651 (TRTGRSASQS…PAMSVNGHRG (496 aa)). 229–236 (GPPGTGKT) is an ATP binding site. Histidine 451 is a Zn(2+) binding site. The active site involves glutamate 452. The Zn(2+) site is built by histidine 455 and aspartate 527.

The protein in the central section; belongs to the AAA ATPase family. In the C-terminal section; belongs to the peptidase M41 family. In terms of assembly, homohexamer. Zn(2+) serves as cofactor.

The protein localises to the cell membrane. Acts as a processive, ATP-dependent zinc metallopeptidase for both cytoplasmic and membrane proteins. Plays a role in the quality control of integral membrane proteins. This is ATP-dependent zinc metalloprotease FtsH from Rubrobacter xylanophilus (strain DSM 9941 / JCM 11954 / NBRC 16129 / PRD-1).